The chain runs to 181 residues: Crossover junction endodeoxyribonuclease RuvC (181 aa).

Residues Asp-7, Glu-67, and Asp-139 contribute to the active site. Mg(2+) is bound by residues Asp-7, Glu-67, and Asp-139.

The protein belongs to the RuvC family. Homodimer which binds Holliday junction (HJ) DNA. The HJ becomes 2-fold symmetrical on binding to RuvC with unstacked arms; it has a different conformation from HJ DNA in complex with RuvA. In the full resolvosome a probable DNA-RuvA(4)-RuvB(12)-RuvC(2) complex forms which resolves the HJ. The cofactor is Mg(2+).

Its subcellular location is the cytoplasm. It carries out the reaction Endonucleolytic cleavage at a junction such as a reciprocal single-stranded crossover between two homologous DNA duplexes (Holliday junction).. Functionally, the RuvA-RuvB-RuvC complex processes Holliday junction (HJ) DNA during genetic recombination and DNA repair. Endonuclease that resolves HJ intermediates. Cleaves cruciform DNA by making single-stranded nicks across the HJ at symmetrical positions within the homologous arms, yielding a 5'-phosphate and a 3'-hydroxyl group; requires a central core of homology in the junction. The consensus cleavage sequence is 5'-(A/T)TT(C/G)-3'. Cleavage occurs on the 3'-side of the TT dinucleotide at the point of strand exchange. HJ branch migration catalyzed by RuvA-RuvB allows RuvC to scan DNA until it finds its consensus sequence, where it cleaves and resolves the cruciform DNA. The sequence is that of Crossover junction endodeoxyribonuclease RuvC from Cupriavidus pinatubonensis (strain JMP 134 / LMG 1197) (Cupriavidus necator (strain JMP 134)).